A 430-amino-acid polypeptide reads, in one-letter code: tRNA(Ile)-lysidine synthase (430 aa).

ATP is bound at residue 21–26 (SGGLDS).

The protein belongs to the tRNA(Ile)-lysidine synthase family.

The protein resides in the cytoplasm. The enzyme catalyses cytidine(34) in tRNA(Ile2) + L-lysine + ATP = lysidine(34) in tRNA(Ile2) + AMP + diphosphate + H(+). In terms of biological role, ligates lysine onto the cytidine present at position 34 of the AUA codon-specific tRNA(Ile) that contains the anticodon CAU, in an ATP-dependent manner. Cytidine is converted to lysidine, thus changing the amino acid specificity of the tRNA from methionine to isoleucine. The protein is tRNA(Ile)-lysidine synthase of Salmonella schwarzengrund (strain CVM19633).